Consider the following 477-residue polypeptide: UDP-N-acetylmuramoylalanine--D-glutamate ligase (477 aa).

Residue 127-133 (GTNGKTT) participates in ATP binding.

The protein belongs to the MurCDEF family.

The protein resides in the cytoplasm. The enzyme catalyses UDP-N-acetyl-alpha-D-muramoyl-L-alanine + D-glutamate + ATP = UDP-N-acetyl-alpha-D-muramoyl-L-alanyl-D-glutamate + ADP + phosphate + H(+). Its pathway is cell wall biogenesis; peptidoglycan biosynthesis. Functionally, cell wall formation. Catalyzes the addition of glutamate to the nucleotide precursor UDP-N-acetylmuramoyl-L-alanine (UMA). This chain is UDP-N-acetylmuramoylalanine--D-glutamate ligase, found in Prochlorococcus marinus (strain MIT 9515).